The chain runs to 222 residues: Small ribosomal subunit protein eS1 (222 aa).

The protein belongs to the eukaryotic ribosomal protein eS1 family.

The chain is Small ribosomal subunit protein eS1 from Pyrobaculum calidifontis (strain DSM 21063 / JCM 11548 / VA1).